Reading from the N-terminus, the 545-residue chain is Glucose-6-phosphate isomerase (545 aa).

Glu-351 (proton donor) is an active-site residue. Active-site residues include His-382 and Lys-510.

It belongs to the GPI family.

Its subcellular location is the cytoplasm. The enzyme catalyses alpha-D-glucose 6-phosphate = beta-D-fructose 6-phosphate. It functions in the pathway carbohydrate biosynthesis; gluconeogenesis. Its pathway is carbohydrate degradation; glycolysis; D-glyceraldehyde 3-phosphate and glycerone phosphate from D-glucose: step 2/4. Catalyzes the reversible isomerization of glucose-6-phosphate to fructose-6-phosphate. This is Glucose-6-phosphate isomerase from Helicobacter pylori (strain HPAG1).